Reading from the N-terminus, the 270-residue chain is uncharacterized protein (270 aa).

The ABC transporter domain occupies 34–266; that stretch reads LIARGLTKSY…PDVRRLYLGD (233 aa). Position 66–73 (66–73) interacts with ATP; that stretch reads GPNGAGKT.

This sequence belongs to the ABC transporter superfamily.

This is an uncharacterized protein from Rhizobium meliloti (strain 1021) (Ensifer meliloti).